Reading from the N-terminus, the 682-residue chain is RNA helicase NPH-II (682 aa).

The Helicase ATP-binding domain maps to 181-354; sequence FELLRKRKQI…EFLPDVEFYH (174 aa). 194 to 201 lines the ATP pocket; the sequence is GSTGIGKT. A DEXH box motif is present at residues 303–306; it reads DEIH. In terms of domain architecture, Helicase C-terminal spans 386 to 551; sequence NISTTLNWCR…KFKLSLPNDL (166 aa).

The protein belongs to the DEAD box helicase family. DEAH subfamily. Monomer.

It localises to the virion. The catalysed reaction is ATP + H2O = ADP + phosphate + H(+). NTP-dependent helicase that catalyzes unidirectional unwinding of 3'tailed duplex RNAs and plays an important role during transcription of early mRNAs, presumably by preventing R-loop formation behind the elongating RNA polymerase. Might also play a role in the export of newly synthesized mRNA chains out of the core into the cytoplasm. Required for replication and propagation of viral particles. In Vertebrata (FPV), this protein is RNA helicase NPH-II (NPH2).